We begin with the raw amino-acid sequence, 760 residues long: Polyribonucleotide nucleotidyltransferase (760 aa).

Mg(2+)-binding residues include Asp492 and Asp498. Residues 559 to 618 (PQHAEVFVNPDIIRIIIGPGGKNIKAITATTGASIDIEDSGRVSIFAPTLEAMEMAREMV) form the KH domain. In terms of domain architecture, S1 motif spans 628-702 (GKNYTGKVRK…SRKAVLLEEQ (75 aa)). Residues 706–760 (WKPEDTARPSGPREGGRRDGGRDGRRDGGRDGRRDGGRDGGRRDGGRRDGGRDRN) form a disordered region. The span at 719 to 760 (EGGRRDGGRDGRRDGGRDGRRDGGRDGGRRDGGRRDGGRDRN) shows a compositional bias: basic and acidic residues.

Belongs to the polyribonucleotide nucleotidyltransferase family. It depends on Mg(2+) as a cofactor.

The protein localises to the cytoplasm. It carries out the reaction RNA(n+1) + phosphate = RNA(n) + a ribonucleoside 5'-diphosphate. Its function is as follows. Involved in mRNA degradation. Catalyzes the phosphorolysis of single-stranded polyribonucleotides processively in the 3'- to 5'-direction. In Nitratidesulfovibrio vulgaris (strain ATCC 29579 / DSM 644 / CCUG 34227 / NCIMB 8303 / VKM B-1760 / Hildenborough) (Desulfovibrio vulgaris), this protein is Polyribonucleotide nucleotidyltransferase.